Reading from the N-terminus, the 342-residue chain is Heat-inducible transcription repressor HrcA (342 aa).

Belongs to the HrcA family.

Negative regulator of class I heat shock genes (grpE-dnaK-dnaJ and groELS operons). Prevents heat-shock induction of these operons. The sequence is that of Heat-inducible transcription repressor HrcA from Shouchella clausii (strain KSM-K16) (Alkalihalobacillus clausii).